A 440-amino-acid polypeptide reads, in one-letter code: Trigger factor (440 aa).

Positions 163–248 (GMVLTVDFSF…LKEIKKKELP (86 aa)) constitute a PPIase FKBP-type domain.

The protein belongs to the FKBP-type PPIase family. Tig subfamily.

Its subcellular location is the cytoplasm. It carries out the reaction [protein]-peptidylproline (omega=180) = [protein]-peptidylproline (omega=0). Functionally, involved in protein export. Acts as a chaperone by maintaining the newly synthesized protein in an open conformation. Functions as a peptidyl-prolyl cis-trans isomerase. The polypeptide is Trigger factor (Trichlorobacter lovleyi (strain ATCC BAA-1151 / DSM 17278 / SZ) (Geobacter lovleyi)).